The following is a 979-amino-acid chain: UPF0182 protein Mb0065 (979 aa).

Transmembrane regions (helical) follow at residues 19–41, 63–85, 114–136, 174–196, 208–230, 261–280, and 285–307; these read LVTA…DIYV, LAIV…LLAY, LFGW…FDWV, WLFV…FGGL, AARV…AYWL, LVLV…AIFL, and IPAM…WPLL. Residues 898–948 form a disordered region; the sequence is GTGRVATAPGGDAASAPPPGAGGPAPPQAVPPPRTTQPPAAPPRGPDVPPA. Low complexity predominate over residues 902 to 912; sequence VATAPGGDAAS. Positions 913–946 are enriched in pro residues; sequence APPPGAGGPAPPQAVPPPRTTQPPAAPPRGPDVP.

The protein belongs to the UPF0182 family.

It is found in the cell membrane. This chain is UPF0182 protein Mb0065, found in Mycobacterium bovis (strain ATCC BAA-935 / AF2122/97).